A 312-amino-acid polypeptide reads, in one-letter code: Methionyl-tRNA formyltransferase (312 aa).

113–116 lines the (6S)-5,6,7,8-tetrahydrofolate pocket; it reads SILP.

Belongs to the Fmt family.

It carries out the reaction L-methionyl-tRNA(fMet) + (6R)-10-formyltetrahydrofolate = N-formyl-L-methionyl-tRNA(fMet) + (6S)-5,6,7,8-tetrahydrofolate + H(+). Its function is as follows. Attaches a formyl group to the free amino group of methionyl-tRNA(fMet). The formyl group appears to play a dual role in the initiator identity of N-formylmethionyl-tRNA by promoting its recognition by IF2 and preventing the misappropriation of this tRNA by the elongation apparatus. The polypeptide is Methionyl-tRNA formyltransferase (Hydrogenovibrio crunogenus (strain DSM 25203 / XCL-2) (Thiomicrospira crunogena)).